Here is a 280-residue protein sequence, read N- to C-terminus: Virginiamycin B lyase (280 aa).

Histidine 215 lines the substrate pocket. Residue glutamate 254 coordinates Mg(2+). Residue histidine 256 is the Proton acceptor of the active site. Glutamate 271 is a binding site for Mg(2+).

This sequence belongs to the Vgb family. Monomer. Requires Mg(2+) as cofactor.

Inactivates the type B streptogramin antibiotics by linearizing the lactone ring at the ester linkage, generating a free phenylglycine carboxylate and converting the threonyl moiety into 2-amino-butenoic acid. In Mycobacterium sp. (strain KMS), this protein is Virginiamycin B lyase.